The following is a 220-amino-acid chain: Protein myomaker (220 aa).

Met1 is a topological domain (extracellular). Residues Gly2–Ala22 form a helical membrane-spanning segment. At Ser23–Tyr37 the chain is on the cytoplasmic side. The chain crosses the membrane as a helical span at residues Phe38–Leu58. The Extracellular segment spans residues Cys59–Asp64. Residues Ile65–Leu85 form a helical membrane-spanning segment. Residues Gly86–Arg93 are Cytoplasmic-facing. The chain crosses the membrane as a helical span at residues Ser94 to Gln110. Topologically, residues Asp111–Arg112 are extracellular. The helical transmembrane segment at Leu113–Trp133 threads the bilayer. The Cytoplasmic portion of the chain corresponds to Leu134–Gln153. Residues Val154 to Trp174 traverse the membrane as a helical segment. Position 175 (Asp175) is a topological domain, extracellular. A helical transmembrane segment spans residues Tyr176 to Pro196. At Lys197–Val220 the chain is on the cytoplasmic side.

It belongs to the TMEM8 family.

The protein resides in the cell membrane. Myoblast-specific protein that mediates myoblast fusion, an essential step for the formation of multi-nucleated muscle fibers. Actively participates in the membrane fusion reaction by mediating the mixing of cell membrane lipids (hemifusion) upstream of mymx. This chain is Protein myomaker, found in Danio rerio (Zebrafish).